A 394-amino-acid polypeptide reads, in one-letter code: Phosphoglycerate kinase (394 aa).

Residues 21-23 (DFN), R36, 59-62 (HLGR), R118, and R151 each bind substrate. Residue S183 is modified to Phosphoserine. K201 provides a ligand contact to ATP. T299 carries the post-translational modification Phosphothreonine. ATP is bound by residues E323 and 350 to 353 (GGDS).

It belongs to the phosphoglycerate kinase family. In terms of assembly, monomer.

It localises to the cytoplasm. The enzyme catalyses (2R)-3-phosphoglycerate + ATP = (2R)-3-phospho-glyceroyl phosphate + ADP. Its pathway is carbohydrate degradation; glycolysis; pyruvate from D-glyceraldehyde 3-phosphate: step 2/5. This chain is Phosphoglycerate kinase, found in Halalkalibacterium halodurans (strain ATCC BAA-125 / DSM 18197 / FERM 7344 / JCM 9153 / C-125) (Bacillus halodurans).